The primary structure comprises 179 residues: Ribosome maturation factor RimM (179 aa).

Residues 100 to 176 enclose the PRC barrel domain; sequence KEEFHLLELI…FLIINPPNGL (77 aa).

It belongs to the RimM family. In terms of assembly, binds ribosomal protein uS19.

It localises to the cytoplasm. In terms of biological role, an accessory protein needed during the final step in the assembly of 30S ribosomal subunit, possibly for assembly of the head region. Essential for efficient processing of 16S rRNA. May be needed both before and after RbfA during the maturation of 16S rRNA. It has affinity for free ribosomal 30S subunits but not for 70S ribosomes. This Prochlorococcus marinus (strain AS9601) protein is Ribosome maturation factor RimM.